A 159-amino-acid chain; its full sequence is IQ domain-containing protein J (159 aa).

The 21-residue stretch at 47–67 (ESKVKIIQRAWREYLQRQEPL) folds into the IQ domain. Residues 63–88 (RQEPLGKRSPSPPSVSSEKLSSSVSM) form a disordered region. The span at 76 to 87 (SVSSEKLSSSVS) shows a compositional bias: low complexity.

The protein is IQ domain-containing protein J of Homo sapiens (Human).